The chain runs to 257 residues: Ethanolamine ammonia-lyase small subunit (257 aa).

Positions 153, 174, and 203 each coordinate adenosylcob(III)alamin.

This sequence belongs to the EutC family. As to quaternary structure, the basic unit is a heterodimer which dimerizes to form tetramers. The heterotetramers trimerize; 6 large subunits form a core ring with 6 small subunits projecting outwards. Adenosylcob(III)alamin serves as cofactor.

The protein resides in the bacterial microcompartment. It catalyses the reaction ethanolamine = acetaldehyde + NH4(+). The protein operates within amine and polyamine degradation; ethanolamine degradation. Functionally, catalyzes the deamination of various vicinal amino-alcohols to oxo compounds. Allows this organism to utilize ethanolamine as the sole source of nitrogen and carbon in the presence of external vitamin B12. This Rhodococcus erythropolis (Arthrobacter picolinophilus) protein is Ethanolamine ammonia-lyase small subunit.